The sequence spans 282 residues: NADPH-dependent 7-cyano-7-deazaguanine reductase (282 aa).

88-90 lines the substrate pocket; it reads IES. An NADPH-binding site is contributed by 90 to 91; the sequence is SK. Cys-190 functions as the Thioimide intermediate in the catalytic mechanism. The active-site Proton donor is the Asp-197. Residue 229-230 participates in substrate binding; that stretch reads HE. 258–259 provides a ligand contact to NADPH; sequence RG.

This sequence belongs to the GTP cyclohydrolase I family. QueF type 2 subfamily. In terms of assembly, homodimer.

It localises to the cytoplasm. The enzyme catalyses 7-aminomethyl-7-carbaguanine + 2 NADP(+) = 7-cyano-7-deazaguanine + 2 NADPH + 3 H(+). Its pathway is tRNA modification; tRNA-queuosine biosynthesis. In terms of biological role, catalyzes the NADPH-dependent reduction of 7-cyano-7-deazaguanine (preQ0) to 7-aminomethyl-7-deazaguanine (preQ1). In Escherichia coli O81 (strain ED1a), this protein is NADPH-dependent 7-cyano-7-deazaguanine reductase.